The following is a 41-amino-acid chain: Pi-stichotoxin-Hcr5b (41 aa).

3 disulfides stabilise this stretch: C4–C37, C6–C30, and C20–C38.

This sequence belongs to the sea anemone type 3 (BDS) potassium channel toxin family.

The protein localises to the secreted. The protein resides in the nematocyst. Remarkably non-selective toxin, with activity on many different ion channels. Weakly and reversibly inhibits rat and human homomeric ASIC1 (isoform ASIC1a) (IC(50)=4.8 uM, and IC(50)=14.6 uM), and ASIC3 (IC(50)=15.9 uM). Molecular modeling interaction with ASIC1a suggests that this peptide hinders the collapse of acidic pockets and stabilizes nonconducting channels state. It activates several potassium channels including Kv1.1/KCNA1, Kv1.2/KCNA2, and drosophila Shaker IR. It moderately to potently inhibits potassium channels including Kv1.3/KCNA3, Kv1.4/KCNA4, Kv1.5/KCNA5, Kv1.6/KCNA6, Kv2.1/KCNB1, Kv4.2/KCND2, Kv7.1/KCNQ1, Kv7.2/Kv7.3 (KCNQ2/KCNQ3), Kv7.4/KCNQ4, hERG/KCNH2, and C.elegans QKT1. On sodium channels, it moderately to potently inhibits Nav1.1/SCN1A, Nav1.2/SCN2A, Nav1.3/SCN3A, Nav1.4/SCN4A, Nav1.5/SCN5A, Nav1.6/SCN8A, Nav1.7/SCN9A, Nav1.8/SCN10A, and B.germanica BgNav. It also moderately to potently inhibits Cav3.1/CACNA1G, Cav3.2/CACNA1H, and Cav3.3/CACNA1I. Significant shifts in the voltage-current relationship are observed on Kv and Nav, depending on the channel isoform, whereas the toxin does not seem to modulate the voltage-sensor domains of Cav channels, acting mainly as a pore blocker. Does not activate nicotinic acetylcholine receptors (nAChR), but potentiates ACh-elicited current of human alpha-7/CHRNA7 nAChR. Is also able to bind T.californica muscle-type nAChRs. In vivo, causes an excitatory effect in mice behavior. Also shows antihyperalgesic and analgesic activity in the acid-induced muscle pain mice model, and weak anti-inflammatory effect in models of acute local inflammation. The sequence is that of Pi-stichotoxin-Hcr5b from Radianthus crispa (Leathery sea anemone).